The chain runs to 609 residues: MFDAKKFLTDVSHEPGVYRMYDDKDQVIYVGKAKDLKKRLSSYFRKNLSSKKTEALVASIHHIDTTLTSSETEALLLEHNFIKLYQPRYNVLLRDDKSYPFILLTKERHQRITSYRGSKKFAGEYFGPYPHAGAVRETLSLLQKLFPVRQCENSVYSNRSRPCLQYQIGRCSAPCVQGYVSDEEYNQQVELARLFLQGKDQQVLDYLIGKMEQASRNLDFEQAARYRDQIQAVRSVIEKQFVSNERLDDMDIMSIAYQHGLACVQVMFIRQGKVLGNRSYFPKVPANTDLSELTETFVGQFYLQGHQGRSIPNSIIVDRQLAEKSELEQLLSEQAGRKVTIQESVKGDKSKYLQLAQVNAKAALNVQLKQSSRMSERYQALCDLLNLPKIKRMECFDISHTMGNQTVASCVVFNKEGPLKSDYRRFNIEGITGGDDYAAMEQVLQKRYERDLEEDKIPDIIFIDGGKGQLNRALNVFQHLQVKWDKNRPHLIGVAKGVDRRAGQEVLIISKQDREIHLPDDSLALHLIQHIRDESHNHAISGHRKKRQKAFTQSGLETIEGVGAKRRQALLKYLGGLQGVKKATLDEIASVPGISPKLAERIFETLKND.

In terms of domain architecture, GIY-YIG spans histidine 13–valine 91. The 36-residue stretch at glutamine 201–valine 236 folds into the UVR domain.

It belongs to the UvrC family. Interacts with UvrB in an incision complex.

It is found in the cytoplasm. Functionally, the UvrABC repair system catalyzes the recognition and processing of DNA lesions. UvrC both incises the 5' and 3' sides of the lesion. The N-terminal half is responsible for the 3' incision and the C-terminal half is responsible for the 5' incision. The protein is UvrABC system protein C of Haemophilus influenzae (strain ATCC 51907 / DSM 11121 / KW20 / Rd).